A 370-amino-acid chain; its full sequence is Phosphoribosylformylglycinamidine cyclo-ligase (370 aa).

This sequence belongs to the AIR synthase family.

It is found in the cytoplasm. It carries out the reaction 2-formamido-N(1)-(5-O-phospho-beta-D-ribosyl)acetamidine + ATP = 5-amino-1-(5-phospho-beta-D-ribosyl)imidazole + ADP + phosphate + H(+). It participates in purine metabolism; IMP biosynthesis via de novo pathway; 5-amino-1-(5-phospho-D-ribosyl)imidazole from N(2)-formyl-N(1)-(5-phospho-D-ribosyl)glycinamide: step 2/2. This Rhodospirillum rubrum (strain ATCC 11170 / ATH 1.1.1 / DSM 467 / LMG 4362 / NCIMB 8255 / S1) protein is Phosphoribosylformylglycinamidine cyclo-ligase.